The following is a 425-amino-acid chain: Serine--tRNA ligase (425 aa).

233–235 provides a ligand contact to L-serine; it reads TAE. An ATP-binding site is contributed by 264-266; sequence RRE. L-serine is bound at residue Glu287. 351–354 is a binding site for ATP; that stretch reads EISS. Residue Ser385 coordinates L-serine.

This sequence belongs to the class-II aminoacyl-tRNA synthetase family. Type-1 seryl-tRNA synthetase subfamily. As to quaternary structure, homodimer. The tRNA molecule binds across the dimer.

The protein resides in the cytoplasm. It carries out the reaction tRNA(Ser) + L-serine + ATP = L-seryl-tRNA(Ser) + AMP + diphosphate + H(+). It catalyses the reaction tRNA(Sec) + L-serine + ATP = L-seryl-tRNA(Sec) + AMP + diphosphate + H(+). It participates in aminoacyl-tRNA biosynthesis; selenocysteinyl-tRNA(Sec) biosynthesis; L-seryl-tRNA(Sec) from L-serine and tRNA(Sec): step 1/1. Its function is as follows. Catalyzes the attachment of serine to tRNA(Ser). Is also able to aminoacylate tRNA(Sec) with serine, to form the misacylated tRNA L-seryl-tRNA(Sec), which will be further converted into selenocysteinyl-tRNA(Sec). This Prochlorococcus marinus (strain MIT 9215) protein is Serine--tRNA ligase.